Consider the following 238-residue polypeptide: MSQSLIVALDFPGKQDVEQFLRHFEGEELFVKVGMELFYKEGPAIITYLKEKGHKIFLDLKLHDIPNTVKSAMRSLASLDVDMVNVHAAGGSSMMKAAIEGLEEGKQEGKERPICIAVTQLTSTSEAMMKKEIGIEKTLEEAVAHYAKLTKESGLDGVVCSTLEVPKLREVCGNEFVTVTPGIRLASDDVNDQVRVATPKRARELGSSYIVVGRSITKAENPLEAYKTVKQQWEGVTV.

Residues aspartate 10, lysine 32, aspartate 59–threonine 68, threonine 122, arginine 184, glutamine 193, glycine 213, and arginine 214 contribute to the substrate site. The active-site Proton donor is lysine 61.

This sequence belongs to the OMP decarboxylase family. Type 1 subfamily. Homodimer.

The catalysed reaction is orotidine 5'-phosphate + H(+) = UMP + CO2. Its pathway is pyrimidine metabolism; UMP biosynthesis via de novo pathway; UMP from orotate: step 2/2. In terms of biological role, catalyzes the decarboxylation of orotidine 5'-monophosphate (OMP) to uridine 5'-monophosphate (UMP). This Bacillus cereus (strain ATCC 10987 / NRS 248) protein is Orotidine 5'-phosphate decarboxylase.